The chain runs to 437 residues: Serine hydroxymethyltransferase (437 aa).

(6S)-5,6,7,8-tetrahydrofolate contacts are provided by residues Leu-130 and 134 to 136; that span reads GHL. N6-(pyridoxal phosphate)lysine is present on Lys-239.

This sequence belongs to the SHMT family. Homodimer. It depends on pyridoxal 5'-phosphate as a cofactor.

It localises to the cytoplasm. The catalysed reaction is (6R)-5,10-methylene-5,6,7,8-tetrahydrofolate + glycine + H2O = (6S)-5,6,7,8-tetrahydrofolate + L-serine. It functions in the pathway one-carbon metabolism; tetrahydrofolate interconversion. The protein operates within amino-acid biosynthesis; glycine biosynthesis; glycine from L-serine: step 1/1. Its function is as follows. Catalyzes the reversible interconversion of serine and glycine with tetrahydrofolate (THF) serving as the one-carbon carrier. This reaction serves as the major source of one-carbon groups required for the biosynthesis of purines, thymidylate, methionine, and other important biomolecules. Also exhibits THF-independent aldolase activity toward beta-hydroxyamino acids, producing glycine and aldehydes, via a retro-aldol mechanism. This is Serine hydroxymethyltransferase from Bartonella quintana (strain Toulouse) (Rochalimaea quintana).